We begin with the raw amino-acid sequence, 430 residues long: Asparagine--tRNA ligase (430 aa).

It belongs to the class-II aminoacyl-tRNA synthetase family. In terms of assembly, homodimer.

The protein localises to the cytoplasm. It carries out the reaction tRNA(Asn) + L-asparagine + ATP = L-asparaginyl-tRNA(Asn) + AMP + diphosphate + H(+). The protein is Asparagine--tRNA ligase of Geobacillus thermodenitrificans (strain NG80-2).